Here is a 1558-residue protein sequence, read N- to C-terminus: ABC transporter NFT1 (1558 aa).

The Extracellular segment spans residues 1–29 (MIKNGTCPYWERDDLSECARREYIEFKFP). Residue asparagine 4 is glycosylated (N-linked (GlcNAc...) asparagine). A helical transmembrane segment spans residues 30-50 (LFILLTGMIYAFCKVFRAFYL). Residues 51–103 (RGKNHTNEAPEFEEQGNGNHEYARFSVLRLKSAWESRSFCNVNNRSTFDKFKK) lie on the Cytoplasmic side of the membrane. Residues 104–124 (FIEGAFIVLQLTIHLYILSSM) form a helical membrane-spanning segment. At 125-130 (PMDNKK) the chain is on the extracellular side. Residues 131 to 151 (FFHQGFLVQMFLWILLLVVIT) traverse the membrane as a helical segment. Topologically, residues 152 to 169 (LRLISASQSFRWVLACKR) are cytoplasmic. The chain crosses the membrane as a helical span at residues 170–190 (DLWAVSFYSYASLFTLSILPL). Residues 191–201 (RSVFIGKIKDK) are Extracellular-facing. Residues 202–222 (IMVKYIISETFIDLALLLLLS) traverse the membrane as a helical segment. The Cytoplasmic portion of the chain corresponds to 223–302 (TSSIEGTRYS…SSKKGRLLPN (80 aa)). The helical transmembrane segment at 303-323 (IICYFKAVFISQLFLAFVSSF) threads the bilayer. Residues 311-621 (FISQLFLAFV…IASTVSLLIQ (311 aa)) form the ABC transmembrane type-1 1 domain. At 324–351 (LNFVPSLLMPRILSYVNDPKSKSWNLVS) the chain is on the extracellular side. The chain crosses the membrane as a helical span at residues 352 to 374 (LYVSSMLVSKIIATTCRGQGLFL). Residues 375 to 449 (GEKGTMQLRT…VMSIDAFKVS (75 aa)) lie on the Cytoplasmic side of the membrane. A disordered region spans residues 410-434 (NASTSFEENPDSSEAEPRKKSSRKD). The span at 424–434 (AEPRKKSSRKD) shows a compositional bias: basic and acidic residues. A helical membrane pass occupies residues 450–470 (EAMNTFYLACEAVFMTVTALM). Over 471 to 481 (ILYSLLGWSAF) the chain is Extracellular. A helical transmembrane segment spans residues 482 to 504 (AGTFALLAMIPLNFWCATFYGNY). The Cytoplasmic portion of the chain corresponds to 505-558 (QADQLILTDKRTSGISEALNSIRVIKLLAWENLFYQKIINVRDGEIRLLKKKAT). Residues 559-579 (IFFLNHLIWFFGPTLVSAITF) traverse the membrane as a helical segment. Topologically, residues 580–584 (SVFIK) are extracellular. A helical membrane pass occupies residues 585–605 (FQNQTLTPTIAFTALSLFAIL). At 606 to 953 (RTPMDQIAST…KFSAYKWLAD (348 aa)) the chain is on the cytoplasmic side. Positions 651–892 (FGFEDASMEW…NEFLRESINN (242 aa)) constitute an ABC transporter 1 domain. 686-693 (GPTGSGKS) provides a ligand contact to ATP. Positions 892–901 (NDSKNTTHNQ) are enriched in polar residues. Residues 892–926 (NDSKNTTHNQIDLKRSTTSKKTKNGDPEGGNSQDE) form a disordered region. Residues 954–974 (YFGGLGVVFVFTSSSILIHGI) form a helical membrane-spanning segment. Residues 961-1251 (VFVFTSSSIL…IIKVFSSVEL (291 aa)) form the ABC transmembrane type-1 2 domain. Residues 975–1013 (TLSQGFWLRYWLDTGSSGSKSTWLYRIVEGHSNIYFLLT) lie on the Extracellular side of the membrane. A helical membrane pass occupies residues 1014 to 1034 (YIIIGLVSSFLTSGKVWIAII). Topologically, residues 1035-1082 (SGTNVTKKIFAKLLSSILYAKLRFHNVTPTGRIMNRFSKDMDIIDQQL) are cytoplasmic. The chain crosses the membrane as a helical span at residues 1083 to 1105 (IPNFEGLSYSVVVCLWIILLIGY). Residues 1106-1109 (VTPQ) are Extracellular-facing. The helical transmembrane segment at 1110-1132 (FLLFAIPLCALYYTVCTLYLRAS) threads the bilayer. The Cytoplasmic segment spans residues 1133 to 1199 (RELKRIDNIN…ATEWITYRVD (67 aa)). Residues 1200–1220 (IIGTLVLFSSSVMIIMKASYL) form a helical membrane-spanning segment. At 1221 to 1222 (DA) the chain is on the extracellular side. Residues 1223–1243 (GLAGILLSNAFSFTETAQWII) traverse the membrane as a helical segment. The Cytoplasmic segment spans residues 1244–1558 (KVFSSVELLM…LAKVSFDNKR (315 aa)). The ABC transporter 2 domain maps to 1285 to 1538 (VELKNLSLRY…RNTIFYRLCR (254 aa)). Residue 1319–1326 (GRTGAGKS) participates in ATP binding.

Belongs to the ABC transporter superfamily. ABCC family. Conjugate transporter (TC 3.A.1.208) subfamily.

The protein resides in the membrane. In Saccharomyces cerevisiae (Baker's yeast), this protein is ABC transporter NFT1 (NFT1).